A 67-amino-acid chain; its full sequence is DNA-directed RNA polymerase subunit omega (67 aa).

This sequence belongs to the RNA polymerase subunit omega family. As to quaternary structure, the RNAP catalytic core consists of 2 alpha, 1 beta, 1 beta' and 1 omega subunit. When a sigma factor is associated with the core the holoenzyme is formed, which can initiate transcription.

It carries out the reaction RNA(n) + a ribonucleoside 5'-triphosphate = RNA(n+1) + diphosphate. In terms of biological role, promotes RNA polymerase assembly. Latches the N- and C-terminal regions of the beta' subunit thereby facilitating its interaction with the beta and alpha subunits. This is DNA-directed RNA polymerase subunit omega from Albidiferax ferrireducens (strain ATCC BAA-621 / DSM 15236 / T118) (Rhodoferax ferrireducens).